Reading from the N-terminus, the 288-residue chain is ATP synthase gamma chain (288 aa).

The protein belongs to the ATPase gamma chain family. In terms of assembly, F-type ATPases have 2 components, CF(1) - the catalytic core - and CF(0) - the membrane proton channel. CF(1) has five subunits: alpha(3), beta(3), gamma(1), delta(1), epsilon(1). CF(0) has three main subunits: a, b and c.

It localises to the cell inner membrane. In terms of biological role, produces ATP from ADP in the presence of a proton gradient across the membrane. The gamma chain is believed to be important in regulating ATPase activity and the flow of protons through the CF(0) complex. The chain is ATP synthase gamma chain from Rickettsia bellii (strain RML369-C).